The chain runs to 558 residues: Glucose-6-phosphate isomerase (558 aa).

Residue Glu-362 is the Proton donor of the active site. Active-site residues include His-393 and Lys-523.

This sequence belongs to the GPI family.

The protein resides in the cytoplasm. The catalysed reaction is alpha-D-glucose 6-phosphate = beta-D-fructose 6-phosphate. Its pathway is carbohydrate degradation; glycolysis; D-glyceraldehyde 3-phosphate and glycerone phosphate from D-glucose: step 2/4. This is Glucose-6-phosphate isomerase (Pgi) from Drosophila simulans (Fruit fly).